Consider the following 414-residue polypeptide: Voltage-gated ClC-type chloride channel ClcB (414 aa).

The next 11 membrane-spanning stretches (helical) occupy residues 5–25 (LVIS…FHQA), 54–74 (ALTP…YQRY), 116–136 (SAIG…SVFA), 147–167 (LWVA…PLAG), 169–189 (LFIA…PVVI), 220–240 (VQYF…PLFL), 255–275 (LLPP…SLIF), 292–312 (TPPG…AVLA), 327–347 (LFVG…WPVL), 353–373 (LLMA…APIM), and 381–401 (MTGE…ATTI).

This sequence belongs to the chloride channel (TC 2.A.49) family. ClcB subfamily.

Its subcellular location is the cell inner membrane. Probably acts as an electrical shunt for an outwardly-directed proton pump that is linked to amino acid decarboxylation, as part of the extreme acid resistance (XAR) response. This is Voltage-gated ClC-type chloride channel ClcB from Yersinia pestis.